We begin with the raw amino-acid sequence, 141 residues long: Hemoglobin subunit alpha-D (141 aa).

A Globin domain is found at 1–141 (MLTAEDKKLI…VAAVLAGKYR (141 aa)). 2 residues coordinate heme b: H58 and H87.

Belongs to the globin family. As to quaternary structure, heterotetramer of two alpha-D chains and two beta chains. Red blood cells.

Its function is as follows. Involved in oxygen transport from the lung to the various peripheral tissues. The protein is Hemoglobin subunit alpha-D (HBAD) of Coturnix japonica (Japanese quail).